The primary structure comprises 255 residues: NADPH-dependent FMN reductase ArsH (255 aa).

43–50 (SLRARSFS) provides a ligand contact to FMN.

The protein belongs to the ArsH family. In terms of assembly, homotetramer. FMN is required as a cofactor.

Functionally, has NADPH-dependent FMN reductase activity and very low azoreductase activity. No activity with NADH. This chain is NADPH-dependent FMN reductase ArsH, found in Shigella flexneri.